A 253-amino-acid polypeptide reads, in one-letter code: Phosphoribosylaminoimidazole-succinocarboxamide synthase (253 aa).

This sequence belongs to the SAICAR synthetase family.

It carries out the reaction 5-amino-1-(5-phospho-D-ribosyl)imidazole-4-carboxylate + L-aspartate + ATP = (2S)-2-[5-amino-1-(5-phospho-beta-D-ribosyl)imidazole-4-carboxamido]succinate + ADP + phosphate + 2 H(+). It functions in the pathway purine metabolism; IMP biosynthesis via de novo pathway; 5-amino-1-(5-phospho-D-ribosyl)imidazole-4-carboxamide from 5-amino-1-(5-phospho-D-ribosyl)imidazole-4-carboxylate: step 1/2. In Jannaschia sp. (strain CCS1), this protein is Phosphoribosylaminoimidazole-succinocarboxamide synthase.